The following is a 202-amino-acid chain: dITP/XTP pyrophosphatase (202 aa).

8-13 (TKNMGK) contacts substrate. Residues Glu41 and Asp70 each coordinate Mg(2+). Asp70 serves as the catalytic Proton acceptor. Substrate-binding positions include Ser71, 155–158 (FGYD), Lys178, and 183–184 (HR).

The protein belongs to the HAM1 NTPase family. In terms of assembly, homodimer. Mg(2+) serves as cofactor.

It catalyses the reaction XTP + H2O = XMP + diphosphate + H(+). It carries out the reaction dITP + H2O = dIMP + diphosphate + H(+). The enzyme catalyses ITP + H2O = IMP + diphosphate + H(+). Its function is as follows. Pyrophosphatase that catalyzes the hydrolysis of nucleoside triphosphates to their monophosphate derivatives, with a high preference for the non-canonical purine nucleotides XTP (xanthosine triphosphate), dITP (deoxyinosine triphosphate) and ITP. Seems to function as a house-cleaning enzyme that removes non-canonical purine nucleotides from the nucleotide pool, thus preventing their incorporation into DNA/RNA and avoiding chromosomal lesions. The chain is dITP/XTP pyrophosphatase from Bacillus anthracis.